Consider the following 291-residue polypeptide: Pirin-like protein (291 aa).

This sequence belongs to the pirin family.

It localises to the nucleus. The polypeptide is Pirin-like protein (Solanum lycopersicum (Tomato)).